Consider the following 404-residue polypeptide: Nicotinate phosphoribosyltransferase (404 aa).

His-224 is subject to Phosphohistidine; by autocatalysis.

The protein belongs to the NAPRTase family. Post-translationally, transiently phosphorylated on a His residue during the reaction cycle. Phosphorylation strongly increases the affinity for substrates and increases the rate of nicotinate D-ribonucleotide production. Dephosphorylation regenerates the low-affinity form of the enzyme, leading to product release.

The catalysed reaction is nicotinate + 5-phospho-alpha-D-ribose 1-diphosphate + ATP + H2O = nicotinate beta-D-ribonucleotide + ADP + phosphate + diphosphate. It functions in the pathway cofactor biosynthesis; NAD(+) biosynthesis; nicotinate D-ribonucleotide from nicotinate: step 1/1. Its function is as follows. Catalyzes the synthesis of beta-nicotinate D-ribonucleotide from nicotinate and 5-phospho-D-ribose 1-phosphate at the expense of ATP. This Proteus mirabilis (strain HI4320) protein is Nicotinate phosphoribosyltransferase.